The sequence spans 401 residues: Jumonji C domain-containing protein 5 (401 aa).

In terms of domain architecture, JmjC spans 255–401 (EYLAQHELFA…PSFSVSFWWE (147 aa)). Fe cation-binding residues include His-306, Asp-308, and His-385.

Fe(2+) serves as cofactor. As to expression, expressed in neurons close to the dorsal lateral neurons involved in circadian rhythm.

The protein localises to the nucleus. It is found in the nucleoplasm. Its subcellular location is the cytoplasm. The enzyme catalyses L-arginyl-[protein] + 2-oxoglutarate + O2 = (3R)-3-hydroxy-L-arginyl-[protein] + succinate + CO2. Its function is as follows. Bifunctional enzyme that acts both as an endopeptidase and 2-oxoglutarate-dependent monooxygenase. May be involved in regulation of behavior and circadian rhythms. In Drosophila melanogaster (Fruit fly), this protein is Jumonji C domain-containing protein 5.